Here is a 1397-residue protein sequence, read N- to C-terminus: DNA-directed RNA polymerase subunit beta (1397 aa).

This sequence belongs to the RNA polymerase beta chain family. The RNAP catalytic core consists of 2 alpha, 1 beta, 1 beta' and 1 omega subunit. When a sigma factor is associated with the core the holoenzyme is formed, which can initiate transcription.

It catalyses the reaction RNA(n) + a ribonucleoside 5'-triphosphate = RNA(n+1) + diphosphate. In terms of biological role, DNA-dependent RNA polymerase catalyzes the transcription of DNA into RNA using the four ribonucleoside triphosphates as substrates. In Rhodospirillum centenum (strain ATCC 51521 / SW), this protein is DNA-directed RNA polymerase subunit beta.